Consider the following 174-residue polypeptide: Transcriptional repressor NrdR (174 aa).

The segment at 3–34 (CPFCQHSDTRVIDSRVSEDGTTIRRRRECEAC) is a zinc-finger region. Residues 49–139 (PTVVKSDGGR…VYRSFQDVAD (91 aa)) form the ATP-cone domain.

This sequence belongs to the NrdR family. The cofactor is Zn(2+).

In terms of biological role, negatively regulates transcription of bacterial ribonucleotide reductase nrd genes and operons by binding to NrdR-boxes. In Xanthomonas oryzae pv. oryzae (strain MAFF 311018), this protein is Transcriptional repressor NrdR.